The following is a 438-amino-acid chain: MGELKEILKQRYHELLDWNVKAPHVPLSQRLKHFTWSWFACTMATGGVGLIIGSFPFRFYGLNTIGKIVYILQIFLFSLFGSCMLFRFIKYPSTIKDSWNHHLEKLFIATCLLSISTFIDMLAIYAYPDTGEWMVWVIRILYYIYVAVSFIYCVMAFFTIFNNHVYTIETASPAWILPIFPPMICGVIAGAVNSTQPAHQLKNMVIFGILFQGLGFWVYLLLFAVNVLRFFTVGLAKPQDRPGMFMFVGPPAFSGLALINIARGAMGSRPYIFVGANSSEYLGFVSTFMAIFIWGLAAWCYCLAMVSFLAGFFTRAPLKFACGWFAFIFPNVGFVNCTIEIGKMIDSKAFQMFGHIIGVILCIQWILLMYLMVRAFLVNDLCYPGKDEDAHPPPKPNTGVLNPTFPPEKAPASLEKVDTHVTSTGGESDPPSSEHESV.

10 consecutive transmembrane segments (helical) span residues 37 to 57 (SWFA…SFPF), 65 to 85 (IGKI…SCML), 106 to 126 (LFIA…AIYA), 140 to 160 (ILYY…FFTI), 172 to 192 (SPAW…AGAV), 205 to 225 (VIFG…LFAV), 242 to 262 (PGMF…INIA), 288 to 308 (FMAI…MVSF), 321 to 341 (ACGW…TIEI), and 353 to 373 (FGHI…YLMV). The tract at residues 390 to 438 (AHPPPKPNTGVLNPTFPPEKAPASLEKVDTHVTSTGGESDPPSSEHESV) is disordered. Phosphoserine occurs at positions 413, 423, 428, 432, 433, and 437.

It belongs to the tellurite-resistance/dicarboxylate transporter (TDT) family.

It localises to the membrane. Permease for malate and other C4 dicarboxylic acids. This Schizosaccharomyces pombe (strain 972 / ATCC 24843) (Fission yeast) protein is Malic acid transport protein (mae1).